A 375-amino-acid chain; its full sequence is 23S rRNA (uracil(747)-C(5))-methyltransferase RlmC (375 aa).

Residues Cys3, Cys11, Cys14, and Cys87 each coordinate [4Fe-4S] cluster. Residues Gln212, Phe241, Glu262, and Asn307 each coordinate S-adenosyl-L-methionine. Cys334 serves as the catalytic Nucleophile.

The protein belongs to the class I-like SAM-binding methyltransferase superfamily. RNA M5U methyltransferase family. RlmC subfamily.

The enzyme catalyses uridine(747) in 23S rRNA + S-adenosyl-L-methionine = 5-methyluridine(747) in 23S rRNA + S-adenosyl-L-homocysteine + H(+). Functionally, catalyzes the formation of 5-methyl-uridine at position 747 (m5U747) in 23S rRNA. The chain is 23S rRNA (uracil(747)-C(5))-methyltransferase RlmC from Shigella sonnei (strain Ss046).